The sequence spans 330 residues: Aspartate--ammonia ligase (330 aa).

Belongs to the class-II aminoacyl-tRNA synthetase family. AsnA subfamily.

It localises to the cytoplasm. The catalysed reaction is L-aspartate + NH4(+) + ATP = L-asparagine + AMP + diphosphate + H(+). It functions in the pathway amino-acid biosynthesis; L-asparagine biosynthesis; L-asparagine from L-aspartate (ammonia route): step 1/1. This chain is Aspartate--ammonia ligase, found in Yersinia pseudotuberculosis serotype O:1b (strain IP 31758).